Here is a 249-residue protein sequence, read N- to C-terminus: Ditrans,polycis-undecaprenyl-diphosphate synthase ((2E,6E)-farnesyl-diphosphate specific) (249 aa).

Aspartate 18 is an active-site residue. Aspartate 18 is a Mg(2+) binding site. Substrate-binding positions include 19-22, phenylalanine 23, lysine 31, histidine 35, and 63-65; these read GNNR and SSE. The active-site Proton acceptor is asparagine 66. Residues tryptophan 67, arginine 69, arginine 186, and 192-194 each bind substrate; that span reads RLS. Position 205 (glutamate 205) interacts with Mg(2+).

It belongs to the UPP synthase family. As to quaternary structure, homodimer. Mg(2+) serves as cofactor.

It carries out the reaction 8 isopentenyl diphosphate + (2E,6E)-farnesyl diphosphate = di-trans,octa-cis-undecaprenyl diphosphate + 8 diphosphate. Functionally, catalyzes the sequential condensation of isopentenyl diphosphate (IPP) with (2E,6E)-farnesyl diphosphate (E,E-FPP) to yield (2Z,6Z,10Z,14Z,18Z,22Z,26Z,30Z,34E,38E)-undecaprenyl diphosphate (di-trans,octa-cis-UPP). UPP is the precursor of glycosyl carrier lipid in the biosynthesis of bacterial cell wall polysaccharide components such as peptidoglycan and lipopolysaccharide. The sequence is that of Ditrans,polycis-undecaprenyl-diphosphate synthase ((2E,6E)-farnesyl-diphosphate specific) from Acinetobacter baylyi (strain ATCC 33305 / BD413 / ADP1).